We begin with the raw amino-acid sequence, 334 residues long: N-acetyl-gamma-glutamyl-phosphate reductase (334 aa).

Cysteine 154 is an active-site residue.

The protein belongs to the NAGSA dehydrogenase family. Type 1 subfamily.

The protein localises to the cytoplasm. It carries out the reaction N-acetyl-L-glutamate 5-semialdehyde + phosphate + NADP(+) = N-acetyl-L-glutamyl 5-phosphate + NADPH + H(+). It participates in amino-acid biosynthesis; L-arginine biosynthesis; N(2)-acetyl-L-ornithine from L-glutamate: step 3/4. Catalyzes the NADPH-dependent reduction of N-acetyl-5-glutamyl phosphate to yield N-acetyl-L-glutamate 5-semialdehyde. This is N-acetyl-gamma-glutamyl-phosphate reductase from Yersinia pestis.